A 439-amino-acid polypeptide reads, in one-letter code: Histidinol dehydrogenase (439 aa).

3 residues coordinate NAD(+): Tyr129, Gln193, and Asn222. Residues Thr245, Gln267, and His270 each contribute to the substrate site. Zn(2+)-binding residues include Gln267 and His270. Residues Glu336 and His337 each act as proton acceptor in the active site. Residues His337, Asp370, Glu424, and His429 each coordinate substrate. Residue Asp370 participates in Zn(2+) binding. Residue His429 coordinates Zn(2+).

This sequence belongs to the histidinol dehydrogenase family. Zn(2+) is required as a cofactor.

The catalysed reaction is L-histidinol + 2 NAD(+) + H2O = L-histidine + 2 NADH + 3 H(+). It participates in amino-acid biosynthesis; L-histidine biosynthesis; L-histidine from 5-phospho-alpha-D-ribose 1-diphosphate: step 9/9. In terms of biological role, catalyzes the sequential NAD-dependent oxidations of L-histidinol to L-histidinaldehyde and then to L-histidine. The polypeptide is Histidinol dehydrogenase (Cutibacterium acnes (strain DSM 16379 / KPA171202) (Propionibacterium acnes)).